Here is a 436-residue protein sequence, read N- to C-terminus: Alpha-2 adrenergic receptor (436 aa).

The Extracellular portion of the chain corresponds to 1-27 (MDVTQSNATKDDANITVTPWPYTETAA). Asn-7 and Asn-14 each carry an N-linked (GlcNAc...) asparagine glycan. A helical transmembrane segment spans residues 28 to 52 (AFIILVVSVIILVSIVGNVLVIVAV). Over 53-64 (LTSRALRAPQNL) the chain is Cytoplasmic. A helical transmembrane segment spans residues 65 to 90 (FLVSLACADILVATLVIPFSLANEIM). Topologically, residues 91–100 (GYWFFGSTWC) are extracellular. A disulfide bond links Cys-100 and Cys-173. Residues 101–123 (AFYLALDVLFCTSSIVHLCAISL) form a helical membrane-spanning segment. The Cytoplasmic segment spans residues 124–144 (DRYWSVTKAVSYNLKRTPKRI). A helical membrane pass occupies residues 145 to 167 (KSMIAVVWVISAVISFPPLIMTK). Residues 168 to 178 (HDEKECLINDE) lie on the Extracellular side of the membrane. The helical transmembrane segment at 179 to 202 (TWYILSSSLVSFFAPGFIMITVYC) threads the bilayer. The Cytoplasmic portion of the chain corresponds to 203-329 (KIYRVAKQRS…QMREKRFTFV (127 aa)). The tract at residues 238 to 280 (KFEKESPSSNSSESNQRQEELDDIDLEESATSDNKPKSSRFSN) is disordered. Residues 257–267 (ELDDIDLEESA) show a composition bias toward acidic residues. The helical transmembrane segment at 330–353 (LTVVMGVFVLCWFPFFFTYSLHAI) threads the bilayer. The Extracellular segment spans residues 354 to 366 (CGDSCEPPEALFK). A helical transmembrane segment spans residues 367–387 (LFFWIGYCNSSVNPIIYTIFN). Residues 388–436 (RDFRKAFKKICLLDCAAHLRDSCLGTLGRLNAKCIFECHQKSNQEETAN) are Cytoplasmic-facing.

This sequence belongs to the G-protein coupled receptor 1 family.

The protein localises to the cell membrane. In terms of biological role, alpha-2 adrenergic receptors mediate the catecholamine-induced inhibition of adenylate cyclase through the action of G proteins. The sequence is that of Alpha-2 adrenergic receptor from Carassius auratus (Goldfish).